The sequence spans 311 residues: Probable cobalamin biosynthesis protein CobD (311 aa).

The next 4 membrane-spanning stretches (helical) occupy residues 53 to 73 (FIFG…AIYG), 76 to 96 (ILIN…FLIS), 157 to 177 (DSII…AFIY), and 288 to 308 (FSID…YVIF).

Belongs to the CobD/CbiB family.

Its subcellular location is the cell membrane. It functions in the pathway cofactor biosynthesis; adenosylcobalamin biosynthesis. Converts cobyric acid to cobinamide by the addition of aminopropanol on the F carboxylic group. In Methanococcus aeolicus (strain ATCC BAA-1280 / DSM 17508 / OCM 812 / Nankai-3), this protein is Probable cobalamin biosynthesis protein CobD.